Reading from the N-terminus, the 248-residue chain is Ubiquinone/menaquinone biosynthesis C-methyltransferase UbiE (248 aa).

Ser-68 and Asp-92 together coordinate S-adenosyl-L-methionine.

Belongs to the class I-like SAM-binding methyltransferase superfamily. MenG/UbiE family.

The catalysed reaction is a 2-demethylmenaquinol + S-adenosyl-L-methionine = a menaquinol + S-adenosyl-L-homocysteine + H(+). The enzyme catalyses a 2-methoxy-6-(all-trans-polyprenyl)benzene-1,4-diol + S-adenosyl-L-methionine = a 5-methoxy-2-methyl-3-(all-trans-polyprenyl)benzene-1,4-diol + S-adenosyl-L-homocysteine + H(+). Its pathway is quinol/quinone metabolism; menaquinone biosynthesis; menaquinol from 1,4-dihydroxy-2-naphthoate: step 2/2. It functions in the pathway cofactor biosynthesis; ubiquinone biosynthesis. Methyltransferase required for the conversion of demethylmenaquinol (DMKH2) to menaquinol (MKH2) and the conversion of 2-polyprenyl-6-methoxy-1,4-benzoquinol (DDMQH2) to 2-polyprenyl-3-methyl-6-methoxy-1,4-benzoquinol (DMQH2). The polypeptide is Ubiquinone/menaquinone biosynthesis C-methyltransferase UbiE (Rickettsia africae (strain ESF-5)).